Reading from the N-terminus, the 214-residue chain is Imidazole glycerol phosphate synthase subunit HisH (214 aa).

Residues 3-211 (TIAVIDYDMG…VSKVIPKNLA (209 aa)) form the Glutamine amidotransferase type-1 domain. Cysteine 81 functions as the Nucleophile in the catalytic mechanism. Active-site residues include histidine 186 and glutamate 188.

In terms of assembly, heterodimer of HisH and HisF.

The protein localises to the cytoplasm. It catalyses the reaction 5-[(5-phospho-1-deoxy-D-ribulos-1-ylimino)methylamino]-1-(5-phospho-beta-D-ribosyl)imidazole-4-carboxamide + L-glutamine = D-erythro-1-(imidazol-4-yl)glycerol 3-phosphate + 5-amino-1-(5-phospho-beta-D-ribosyl)imidazole-4-carboxamide + L-glutamate + H(+). The catalysed reaction is L-glutamine + H2O = L-glutamate + NH4(+). The protein operates within amino-acid biosynthesis; L-histidine biosynthesis; L-histidine from 5-phospho-alpha-D-ribose 1-diphosphate: step 5/9. Its function is as follows. IGPS catalyzes the conversion of PRFAR and glutamine to IGP, AICAR and glutamate. The HisH subunit catalyzes the hydrolysis of glutamine to glutamate and ammonia as part of the synthesis of IGP and AICAR. The resulting ammonia molecule is channeled to the active site of HisF. This Trichodesmium erythraeum (strain IMS101) protein is Imidazole glycerol phosphate synthase subunit HisH.